The primary structure comprises 602 residues: Glutaminase liver isoform, mitochondrial (602 aa).

The transit peptide at 1–14 (MRSMRALQNALSRA) directs the protein to the mitochondrion. Disordered regions lie at residues 1 to 29 (MRSM…PSRG) and 45 to 66 (AQGR…ASHS). Ser219 contributes to the substrate binding site. Lys253 bears the N6-succinyllysine mark. Asn268 is a binding site for substrate. Lys279 and Lys284 each carry N6-acetyllysine. 2 residues coordinate substrate: Glu314 and Asn321. N6-acetyllysine is present on Lys329. Positions 347, 399, and 417 each coordinate substrate. ANK repeat units follow at residues 518–551 (DSRT…VKDR) and 552–585 (WGNI…SETQ).

It belongs to the glutaminase family. As to quaternary structure, homotetramer, dimer of dimers. Does not assemble into higher oligomers. Interacts with the PDZ domain of the syntrophin SNTA1. Interacts with the PDZ domain of TAX1BP3.

The protein resides in the mitochondrion. The catalysed reaction is L-glutamine + H2O = L-glutamate + NH4(+). Its activity is regulated as follows. Enzyme activity is not stimulated by phosphate. Phosphate increases kcat, but decreases substrate affinity, resulting in unchanged enzyme activity. Its function is as follows. Plays an important role in the regulation of glutamine catabolism. Promotes mitochondrial respiration and increases ATP generation in cells by catalyzing the synthesis of glutamate and alpha-ketoglutarate. Increases cellular anti-oxidant function via NADH and glutathione production. May play a role in preventing tumor proliferation. This chain is Glutaminase liver isoform, mitochondrial (Gls2), found in Mus musculus (Mouse).